We begin with the raw amino-acid sequence, 132 residues long: Small ribosomal subunit protein uS8 (132 aa).

The protein belongs to the universal ribosomal protein uS8 family. Part of the 30S ribosomal subunit. Contacts proteins S5 and S12.

Functionally, one of the primary rRNA binding proteins, it binds directly to 16S rRNA central domain where it helps coordinate assembly of the platform of the 30S subunit. The chain is Small ribosomal subunit protein uS8 from Rhodospirillum rubrum (strain ATCC 11170 / ATH 1.1.1 / DSM 467 / LMG 4362 / NCIMB 8255 / S1).